We begin with the raw amino-acid sequence, 206 residues long: Small ribosomal subunit protein uS4 (206 aa).

Positions 96 to 156 (GRLDNVVYRM…EKAKKQSRVK (61 aa)) constitute an S4 RNA-binding domain.

The protein belongs to the universal ribosomal protein uS4 family. In terms of assembly, part of the 30S ribosomal subunit. Contacts protein S5. The interaction surface between S4 and S5 is involved in control of translational fidelity.

In terms of biological role, one of the primary rRNA binding proteins, it binds directly to 16S rRNA where it nucleates assembly of the body of the 30S subunit. With S5 and S12 plays an important role in translational accuracy. This chain is Small ribosomal subunit protein uS4, found in Cronobacter sakazakii (strain ATCC BAA-894) (Enterobacter sakazakii).